The primary structure comprises 525 residues: GMP synthase [glutamine-hydrolyzing] (525 aa).

The 199-residue stretch at 9–207 (RILILDFGSQ…VRDICQCEAL (199 aa)) folds into the Glutamine amidotransferase type-1 domain. Catalysis depends on C86, which acts as the Nucleophile. Catalysis depends on residues H181 and E183. The GMPS ATP-PPase domain occupies 208–400 (WTPAKIIDDA…LGLPYDMLYR (193 aa)). 235-241 (SGGVDSS) is an ATP binding site.

Homodimer.

The catalysed reaction is XMP + L-glutamine + ATP + H2O = GMP + L-glutamate + AMP + diphosphate + 2 H(+). It participates in purine metabolism; GMP biosynthesis; GMP from XMP (L-Gln route): step 1/1. In terms of biological role, catalyzes the synthesis of GMP from XMP. This Shigella boydii serotype 4 (strain Sb227) protein is GMP synthase [glutamine-hydrolyzing].